Here is a 416-residue protein sequence, read N- to C-terminus: Transcription factor LATE FLOWERING (416 aa).

2 stretches are compositionally biased toward low complexity: residues 176 to 186 (STTTTTTALPP) and 200 to 212 (TSPT…TSET). Disordered stretches follow at residues 176-226 (STTT…AGGS) and 276-311 (LGGP…QTVA). The basic motif; degenerate stretch occupies residues 303-316 (ISSDPQTVAARLRR). A bHLH domain is found at 303–352 (ISSDPQTVAARLRRERVSERLRVLQRLVPGGSKMDTATMLDEAASYLKFL). A helix-loop-helix motif region spans residues 317–352 (ERVSERLRVLQRLVPGGSKMDTATMLDEAASYLKFL).

This sequence belongs to the bHLH protein family. Interacts with PIL13 and PIL15.

Its subcellular location is the nucleus. In terms of biological role, transcription factor involved in the negative regulation of flowering. May be involved in the repression of the flowering factor GI and HD1 by interacting with PIL13 and PIL15 and competing with PRR1. Possesses transactivation activity in yeast. The protein is Transcription factor LATE FLOWERING of Oryza sativa subsp. japonica (Rice).